The primary structure comprises 213 residues: FMN-dependent NADH:quinone oxidoreductase (213 aa).

This sequence belongs to the azoreductase type 1 family. As to quaternary structure, homodimer. The cofactor is FMN.

The catalysed reaction is 2 a quinone + NADH + H(+) = 2 a 1,4-benzosemiquinone + NAD(+). It carries out the reaction N,N-dimethyl-1,4-phenylenediamine + anthranilate + 2 NAD(+) = 2-(4-dimethylaminophenyl)diazenylbenzoate + 2 NADH + 2 H(+). Functionally, quinone reductase that provides resistance to thiol-specific stress caused by electrophilic quinones. Its function is as follows. Also exhibits azoreductase activity. Catalyzes the reductive cleavage of the azo bond in aromatic azo compounds to the corresponding amines. The chain is FMN-dependent NADH:quinone oxidoreductase from Streptococcus agalactiae serotype III (strain NEM316).